The chain runs to 552 residues: Glutathione reductase, chloroplastic/mitochondrial (552 aa).

A chloroplast and mitochondrion-targeting transit peptide spans 1-60 (MNQAMATPLSLSCCSPTLTRSTLFFTKTFPFSRSFSTPLPLSTKTLISLSPPHRTFAVRA). Residues Ser-83, Gly-84, Glu-103, Thr-120, Cys-121, and Lys-129 each coordinate FAD. Ser-83 lines the glutathione pocket. Residues Cys-121 and Cys-126 are joined by a disulfide bond. Residue Tyr-178 coordinates glutathione. Gly-194 is a binding site for FAD. 6 residues coordinate NADP(+): Gly-254, Ile-257, Glu-260, Arg-277, Arg-283, and Gly-341. Asp-382 and Thr-390 together coordinate FAD. Ala-420 is an NADP(+) binding site. His-515 provides a ligand contact to FAD. The active-site Proton acceptor is His-515. A disordered region spans residues 527 to 552 (TPTRKVRKNQASQGKSDSKAKAVAGS).

It belongs to the class-I pyridine nucleotide-disulfide oxidoreductase family. As to quaternary structure, homodimer. FAD serves as cofactor.

The protein localises to the plastid. The protein resides in the chloroplast. It is found in the mitochondrion. It carries out the reaction 2 glutathione + NADP(+) = glutathione disulfide + NADPH + H(+). Its function is as follows. Catalyzes the reduction of glutathione disulfide (GSSG) to reduced glutathione (GSH). Maintains high levels of GSH in the chloroplast. The protein is Glutathione reductase, chloroplastic/mitochondrial (GR) of Pisum sativum (Garden pea).